Reading from the N-terminus, the 146-residue chain is Putative pre-16S rRNA nuclease (146 aa).

The protein belongs to the YqgF nuclease family.

Its subcellular location is the cytoplasm. Could be a nuclease involved in processing of the 5'-end of pre-16S rRNA. This is Putative pre-16S rRNA nuclease from Burkholderia pseudomallei (strain 668).